The chain runs to 239 residues: Phosphoribosylaminoimidazole-succinocarboxamide synthase (239 aa).

Belongs to the SAICAR synthetase family.

It catalyses the reaction 5-amino-1-(5-phospho-D-ribosyl)imidazole-4-carboxylate + L-aspartate + ATP = (2S)-2-[5-amino-1-(5-phospho-beta-D-ribosyl)imidazole-4-carboxamido]succinate + ADP + phosphate + 2 H(+). It functions in the pathway purine metabolism; IMP biosynthesis via de novo pathway; 5-amino-1-(5-phospho-D-ribosyl)imidazole-4-carboxamide from 5-amino-1-(5-phospho-D-ribosyl)imidazole-4-carboxylate: step 1/2. The sequence is that of Phosphoribosylaminoimidazole-succinocarboxamide synthase from Acinetobacter baumannii (strain AB307-0294).